Reading from the N-terminus, the 61-residue chain is Small ribosomal subunit protein uS14 (61 aa).

4 residues coordinate Zn(2+): C24, C27, C40, and C43.

This sequence belongs to the universal ribosomal protein uS14 family. Zinc-binding uS14 subfamily. Part of the 30S ribosomal subunit. Contacts proteins S3 and S10. It depends on Zn(2+) as a cofactor.

Binds 16S rRNA, required for the assembly of 30S particles and may also be responsible for determining the conformation of the 16S rRNA at the A site. This is Small ribosomal subunit protein uS14 from Acetivibrio thermocellus (strain ATCC 27405 / DSM 1237 / JCM 9322 / NBRC 103400 / NCIMB 10682 / NRRL B-4536 / VPI 7372) (Clostridium thermocellum).